Here is a 485-residue protein sequence, read N- to C-terminus: N-succinylglutamate 5-semialdehyde dehydrogenase (485 aa).

NAD(+) is bound at residue 220–225; that stretch reads GSANTG. Residues E243 and C278 contribute to the active site.

The protein belongs to the aldehyde dehydrogenase family. AstD subfamily.

It catalyses the reaction N-succinyl-L-glutamate 5-semialdehyde + NAD(+) + H2O = N-succinyl-L-glutamate + NADH + 2 H(+). Its pathway is amino-acid degradation; L-arginine degradation via AST pathway; L-glutamate and succinate from L-arginine: step 4/5. Its function is as follows. Catalyzes the NAD-dependent reduction of succinylglutamate semialdehyde into succinylglutamate. The polypeptide is N-succinylglutamate 5-semialdehyde dehydrogenase (Vibrio parahaemolyticus serotype O3:K6 (strain RIMD 2210633)).